The following is a 361-amino-acid chain: Phosphoserine aminotransferase (361 aa).

Arginine 42 serves as a coordination point for L-glutamate. Pyridoxal 5'-phosphate-binding positions include 76–77 (AR), tryptophan 102, threonine 153, aspartate 173, and glutamine 196. Lysine 197 carries the post-translational modification N6-(pyridoxal phosphate)lysine. Residue 238–239 (NT) participates in pyridoxal 5'-phosphate binding.

This sequence belongs to the class-V pyridoxal-phosphate-dependent aminotransferase family. SerC subfamily. In terms of assembly, homodimer. Pyridoxal 5'-phosphate serves as cofactor.

It is found in the cytoplasm. The enzyme catalyses O-phospho-L-serine + 2-oxoglutarate = 3-phosphooxypyruvate + L-glutamate. It carries out the reaction 4-(phosphooxy)-L-threonine + 2-oxoglutarate = (R)-3-hydroxy-2-oxo-4-phosphooxybutanoate + L-glutamate. Its pathway is amino-acid biosynthesis; L-serine biosynthesis; L-serine from 3-phospho-D-glycerate: step 2/3. The protein operates within cofactor biosynthesis; pyridoxine 5'-phosphate biosynthesis; pyridoxine 5'-phosphate from D-erythrose 4-phosphate: step 3/5. Functionally, catalyzes the reversible conversion of 3-phosphohydroxypyruvate to phosphoserine and of 3-hydroxy-2-oxo-4-phosphonooxybutanoate to phosphohydroxythreonine. The sequence is that of Phosphoserine aminotransferase from Yersinia enterocolitica serotype O:8 / biotype 1B (strain NCTC 13174 / 8081).